The chain runs to 206 residues: Regulator of rDNA transcription protein 14 (206 aa).

The disordered stretch occupies residues 178-206; the sequence is FVKDHRYPGLTPGLAPVGLSDEEDSSEED. 3 positions are modified to phosphoserine: serine 197, serine 202, and serine 203. Residues 197–206 show a composition bias toward acidic residues; sequence SDEEDSSEED.

Belongs to the RRT14 family.

Its subcellular location is the nucleus. It is found in the nucleolus. In terms of biological role, involved in ribosome biogenesis, probably through modulation of rDNA transcription. This chain is Regulator of rDNA transcription protein 14 (RRT14), found in Saccharomyces cerevisiae (strain ATCC 204508 / S288c) (Baker's yeast).